Here is a 353-residue protein sequence, read N- to C-terminus: Photosystem II protein D1 (353 aa).

Thr-2 is modified (N-acetylthreonine). A Phosphothreonine modification is found at Thr-2. 3 helical membrane-spanning segments follow: residues 29 to 46 (YIGW…TATS), 118 to 133 (HFLL…EWEL), and 142 to 156 (WIAV…AATA). His-118 provides a ligand contact to chlorophyll a. Pheophytin a is bound at residue Tyr-126. The [CaMn4O5] cluster site is built by Asp-170 and Glu-189. Residues 197 to 218 (FHMLGVAGVFGGSLFSAMHGSL) traverse the membrane as a helical segment. His-198 serves as a coordination point for chlorophyll a. A quinone contacts are provided by residues His-215 and 264-265 (SF). Fe cation is bound at residue His-215. His-272 is a binding site for Fe cation. The helical transmembrane segment at 274-288 (FLAAWPVVGIWFTSL) threads the bilayer. 4 residues coordinate [CaMn4O5] cluster: His-332, Glu-333, Asp-342, and Ala-344. A propeptide spanning residues 345–353 (AIDAPSVNG) is cleaved from the precursor.

This sequence belongs to the reaction center PufL/M/PsbA/D family. As to quaternary structure, PSII is composed of 1 copy each of membrane proteins PsbA, PsbB, PsbC, PsbD, PsbE, PsbF, PsbH, PsbI, PsbJ, PsbK, PsbL, PsbM, PsbT, PsbX, PsbY, PsbZ, Psb30/Ycf12, at least 3 peripheral proteins of the oxygen-evolving complex and a large number of cofactors. It forms dimeric complexes. Requires The D1/D2 heterodimer binds P680, chlorophylls that are the primary electron donor of PSII, and subsequent electron acceptors. It shares a non-heme iron and each subunit binds pheophytin, quinone, additional chlorophylls, carotenoids and lipids. D1 provides most of the ligands for the Mn4-Ca-O5 cluster of the oxygen-evolving complex (OEC). There is also a Cl(-1) ion associated with D1 and D2, which is required for oxygen evolution. The PSII complex binds additional chlorophylls, carotenoids and specific lipids. as cofactor. In terms of processing, tyr-161 forms a radical intermediate that is referred to as redox-active TyrZ, YZ or Y-Z. C-terminally processed by CTPA; processing is essential to allow assembly of the oxygen-evolving complex and thus photosynthetic growth.

The protein resides in the plastid. Its subcellular location is the chloroplast thylakoid membrane. It catalyses the reaction 2 a plastoquinone + 4 hnu + 2 H2O = 2 a plastoquinol + O2. Photosystem II (PSII) is a light-driven water:plastoquinone oxidoreductase that uses light energy to abstract electrons from H(2)O, generating O(2) and a proton gradient subsequently used for ATP formation. It consists of a core antenna complex that captures photons, and an electron transfer chain that converts photonic excitation into a charge separation. The D1/D2 (PsbA/PsbD) reaction center heterodimer binds P680, the primary electron donor of PSII as well as several subsequent electron acceptors. This is Photosystem II protein D1 from Coffea arabica (Arabian coffee).